The following is a 253-amino-acid chain: Low affinity immunoglobulin gamma Fc region receptor III-B (253 aa).

Positions 1 to 20 (MGQPLPPVALLLLVSASSRA) are cleaved as a signal peptide. Residues 21 to 207 (ADVPKALVLL…VSSSVLPWHQ (187 aa)) lie on the Extracellular side of the membrane. Ig-like C2-type domains are found at residues 24–105 (PKAL…LRVH) and 120–189 (EGEP…VTIT). Cystine bridges form between Cys-47-Cys-89 and Cys-128-Cys-172. Residues Asn-56, Asn-63, Asn-165, and Asn-180 are each glycosylated (N-linked (GlcNAc...) asparagine). Residues 208-226 (IAFCLVMGLLLAADTGLYF) form a helical membrane-spanning segment. Residues 227–253 (SVQRDLRSSQRARKEHTLGWSLGSQDK) are Cytoplasmic-facing.

Forms a heterooligomeric complex with ITAM-containing signaling subunits FCER1G. Interacts (via transmembrane domain) with signaling subunits; this interaction is a prerequisite for receptor complex expression on the cell surface and intracellular signal transduction. Binds the Fc region of antigen-complexed IgG.

The protein resides in the cell membrane. Its function is as follows. Receptor for the invariable Fc fragment of immunoglobulin gamma (IgG). Optimally activated upon binding of clustered antigen-IgG complexes displayed on cell surfaces, triggers lysis of antibody-coated cells, a process known as antibody-dependent cellular cytotoxicity (ADCC). Does not bind free monomeric IgG, thus avoiding inappropriate effector cell activation in the absence of antigenic trigger. Mediates IgG effector functions on natural killer (NK) cells. Binds antigen-IgG complexes generated upon infection and triggers NK cell-dependent cytokine production and degranulation to limit viral load and propagation. Fc-binding subunit that associates with FCER1G adapters to form functional signaling complexes. Following the engagement of antigen-IgG complexes, triggers phosphorylation of immunoreceptor tyrosine-based activation motif (ITAM)-containing adapters with subsequent activation of phosphatidylinositol 3-kinase signaling and sustained elevation of intracellular calcium that ultimately drive NK cell activation. Mediates enhanced ADCC in response to afucosylated IgGs. In Oryctolagus cuniculus (Rabbit), this protein is Low affinity immunoglobulin gamma Fc region receptor III-B (FCGR3B).